A 110-amino-acid chain; its full sequence is Large ribosomal subunit protein uL22 (110 aa).

Belongs to the universal ribosomal protein uL22 family. As to quaternary structure, part of the 50S ribosomal subunit.

Functionally, this protein binds specifically to 23S rRNA; its binding is stimulated by other ribosomal proteins, e.g. L4, L17, and L20. It is important during the early stages of 50S assembly. It makes multiple contacts with different domains of the 23S rRNA in the assembled 50S subunit and ribosome. Its function is as follows. The globular domain of the protein is located near the polypeptide exit tunnel on the outside of the subunit, while an extended beta-hairpin is found that lines the wall of the exit tunnel in the center of the 70S ribosome. This chain is Large ribosomal subunit protein uL22, found in Haemophilus influenzae (strain 86-028NP).